We begin with the raw amino-acid sequence, 1076 residues long: Bifunctional glutamine synthetase adenylyltransferase/adenylyl-removing enzyme (1076 aa).

Residues 1 to 521 (MESSIFKPSS…LHLDIYYRPM (521 aa)) form an adenylyl removase region. The segment at 524–1076 (VNAQMENDQI…LERNRRRAQR (553 aa)) is adenylyl transferase. Residues 1042–1056 (TATASAATQQPQTAP) are compositionally biased toward low complexity. Residues 1042 to 1076 (TATASAATQQPQTAPRPRMHVIAPRLERNRRRAQR) form a disordered region.

The protein belongs to the GlnE family. Requires Mg(2+) as cofactor.

It carries out the reaction [glutamine synthetase]-O(4)-(5'-adenylyl)-L-tyrosine + phosphate = [glutamine synthetase]-L-tyrosine + ADP. The catalysed reaction is [glutamine synthetase]-L-tyrosine + ATP = [glutamine synthetase]-O(4)-(5'-adenylyl)-L-tyrosine + diphosphate. Its function is as follows. Involved in the regulation of glutamine synthetase GlnA, a key enzyme in the process to assimilate ammonia. When cellular nitrogen levels are high, the C-terminal adenylyl transferase (AT) inactivates GlnA by covalent transfer of an adenylyl group from ATP to specific tyrosine residue of GlnA, thus reducing its activity. Conversely, when nitrogen levels are low, the N-terminal adenylyl removase (AR) activates GlnA by removing the adenylyl group by phosphorolysis, increasing its activity. The regulatory region of GlnE binds the signal transduction protein PII (GlnB) which indicates the nitrogen status of the cell. In Bifidobacterium longum (strain DJO10A), this protein is Bifunctional glutamine synthetase adenylyltransferase/adenylyl-removing enzyme.